A 429-amino-acid chain; its full sequence is Chaperone SurA (429 aa).

Residues 1–19 form the signal peptide; that stretch reads MKKTLLALLIASVMQSALA. 2 consecutive PpiC domains span residues 172–273 and 283–381; these read RTEY…KLVD and VEQY…LVEG.

It is found in the periplasm. The enzyme catalyses [protein]-peptidylproline (omega=180) = [protein]-peptidylproline (omega=0). Its function is as follows. Chaperone involved in the correct folding and assembly of outer membrane proteins. Recognizes specific patterns of aromatic residues and the orientation of their side chains, which are found more frequently in integral outer membrane proteins. May act in both early periplasmic and late outer membrane-associated steps of protein maturation. The polypeptide is Chaperone SurA (Chromobacterium violaceum (strain ATCC 12472 / DSM 30191 / JCM 1249 / CCUG 213 / NBRC 12614 / NCIMB 9131 / NCTC 9757 / MK)).